The following is a 485-amino-acid chain: N-succinylglutamate 5-semialdehyde dehydrogenase (485 aa).

220-225 (GSANTG) is a binding site for NAD(+). Active-site residues include glutamate 243 and cysteine 278.

This sequence belongs to the aldehyde dehydrogenase family. AstD subfamily.

It catalyses the reaction N-succinyl-L-glutamate 5-semialdehyde + NAD(+) + H2O = N-succinyl-L-glutamate + NADH + 2 H(+). Its pathway is amino-acid degradation; L-arginine degradation via AST pathway; L-glutamate and succinate from L-arginine: step 4/5. In terms of biological role, catalyzes the NAD-dependent reduction of succinylglutamate semialdehyde into succinylglutamate. The polypeptide is N-succinylglutamate 5-semialdehyde dehydrogenase (Aliivibrio salmonicida (strain LFI1238) (Vibrio salmonicida (strain LFI1238))).